A 475-amino-acid polypeptide reads, in one-letter code: tRNA-2-methylthio-N(6)-dimethylallyladenosine synthase (475 aa).

Positions 2–119 constitute an MTTase N-terminal domain; sequence AKLHITTWGC…LPEMINKIRG (118 aa). Positions 11, 48, 82, 156, 160, and 163 each coordinate [4Fe-4S] cluster. The Radical SAM core domain occupies 142 to 374; that stretch reads RAEGPTAFVS…QQRINHQAMQ (233 aa). A TRAM domain is found at 377 to 440; the sequence is RAMLGTEQRV…TNSLRGDVVR (64 aa).

This sequence belongs to the methylthiotransferase family. MiaB subfamily. Monomer. [4Fe-4S] cluster serves as cofactor.

The protein localises to the cytoplasm. It carries out the reaction N(6)-dimethylallyladenosine(37) in tRNA + (sulfur carrier)-SH + AH2 + 2 S-adenosyl-L-methionine = 2-methylsulfanyl-N(6)-dimethylallyladenosine(37) in tRNA + (sulfur carrier)-H + 5'-deoxyadenosine + L-methionine + A + S-adenosyl-L-homocysteine + 2 H(+). Catalyzes the methylthiolation of N6-(dimethylallyl)adenosine (i(6)A), leading to the formation of 2-methylthio-N6-(dimethylallyl)adenosine (ms(2)i(6)A) at position 37 in tRNAs that read codons beginning with uridine. In Actinobacillus pleuropneumoniae serotype 5b (strain L20), this protein is tRNA-2-methylthio-N(6)-dimethylallyladenosine synthase.